The following is a 280-amino-acid chain: Hydroxyacyl-thioester dehydratase type 2, mitochondrial (280 aa).

This sequence belongs to the HTD2 family.

It localises to the mitochondrion. Mitochondrial 3-hydroxyacyl-thioester dehydratase involved in fatty acid biosynthesis. Required for respiratory growth and for normal mitochondrial morphology. This Saccharomyces cerevisiae (strain ATCC 204508 / S288c) (Baker's yeast) protein is Hydroxyacyl-thioester dehydratase type 2, mitochondrial (HTD2).